A 288-amino-acid polypeptide reads, in one-letter code: Quinate/shikimate dehydrogenase (288 aa).

2 residues coordinate substrate: lysine 71 and aspartate 107. NAD(+) is bound by residues 132-135, 155-158, lysine 205, 232-235, and glycine 255; these read AGGA, NRRD, and CVYN.

The protein belongs to the shikimate dehydrogenase family. In terms of assembly, homodimer.

It catalyses the reaction L-quinate + NAD(+) = 3-dehydroquinate + NADH + H(+). The enzyme catalyses L-quinate + NADP(+) = 3-dehydroquinate + NADPH + H(+). The catalysed reaction is shikimate + NADP(+) = 3-dehydroshikimate + NADPH + H(+). It carries out the reaction shikimate + NAD(+) = 3-dehydroshikimate + NADH + H(+). It functions in the pathway metabolic intermediate biosynthesis; chorismate biosynthesis; chorismate from D-erythrose 4-phosphate and phosphoenolpyruvate: step 4/7. Its function is as follows. The actual biological function of YdiB remains unclear, nor is it known whether 3-dehydroshikimate or quinate represents the natural substrate. Catalyzes the reversible NAD-dependent reduction of both 3-dehydroshikimate (DHSA) and 3-dehydroquinate to yield shikimate (SA) and quinate, respectively. It can use both NAD or NADP for catalysis, however it has higher catalytic efficiency with NAD. This chain is Quinate/shikimate dehydrogenase, found in Escherichia coli O157:H7.